Consider the following 289-residue polypeptide: Homoserine kinase (289 aa).

79–89 is an ATP binding site; sequence PLARGLGSSSS.

Belongs to the GHMP kinase family. Homoserine kinase subfamily.

It localises to the cytoplasm. The catalysed reaction is L-homoserine + ATP = O-phospho-L-homoserine + ADP + H(+). The protein operates within amino-acid biosynthesis; L-threonine biosynthesis; L-threonine from L-aspartate: step 4/5. Functionally, catalyzes the ATP-dependent phosphorylation of L-homoserine to L-homoserine phosphate. The sequence is that of Homoserine kinase from Streptococcus pneumoniae (strain Taiwan19F-14).